Consider the following 429-residue polypeptide: UDP-N-acetylglucosamine 1-carboxyvinyltransferase (429 aa).

22–23 (KN) lines the phosphoenolpyruvate pocket. Arg93 provides a ligand contact to UDP-N-acetyl-alpha-D-glucosamine. The active-site Proton donor is the Cys117. Cys117 is subject to 2-(S-cysteinyl)pyruvic acid O-phosphothioketal. Residues 122-126 (RPVDQ), Asp313, and Ile335 contribute to the UDP-N-acetyl-alpha-D-glucosamine site.

It belongs to the EPSP synthase family. MurA subfamily.

It is found in the cytoplasm. It carries out the reaction phosphoenolpyruvate + UDP-N-acetyl-alpha-D-glucosamine = UDP-N-acetyl-3-O-(1-carboxyvinyl)-alpha-D-glucosamine + phosphate. It participates in cell wall biogenesis; peptidoglycan biosynthesis. Its function is as follows. Cell wall formation. Adds enolpyruvyl to UDP-N-acetylglucosamine. The sequence is that of UDP-N-acetylglucosamine 1-carboxyvinyltransferase from Variovorax paradoxus (strain S110).